The following is a 283-amino-acid chain: tRNA-cytidine(32) 2-sulfurtransferase (283 aa).

Residues 49–54 (SGGKDS) carry the PP-loop motif motif. [4Fe-4S] cluster-binding residues include Cys124, Cys127, and Cys215.

This sequence belongs to the TtcA family. In terms of assembly, homodimer. The cofactor is Mg(2+). [4Fe-4S] cluster is required as a cofactor.

It is found in the cytoplasm. The enzyme catalyses cytidine(32) in tRNA + S-sulfanyl-L-cysteinyl-[cysteine desulfurase] + AH2 + ATP = 2-thiocytidine(32) in tRNA + L-cysteinyl-[cysteine desulfurase] + A + AMP + diphosphate + H(+). The protein operates within tRNA modification. Functionally, catalyzes the ATP-dependent 2-thiolation of cytidine in position 32 of tRNA, to form 2-thiocytidine (s(2)C32). The sulfur atoms are provided by the cysteine/cysteine desulfurase (IscS) system. This is tRNA-cytidine(32) 2-sulfurtransferase from Acaryochloris marina (strain MBIC 11017).